We begin with the raw amino-acid sequence, 149 residues long: Large ribosomal subunit protein uL15 (149 aa).

Basic residues predominate over residues 1–29 (MVSHLKKTRKLRGHVSHGHGRVGKHRKGG). Residues 1–38 (MVSHLKKTRKLRGHVSHGHGRVGKHRKGGCRGGRGKAG) form a disordered region.

Belongs to the universal ribosomal protein uL15 family.

The sequence is that of Large ribosomal subunit protein uL15 (RPL27A) from Tetrahymena thermophila.